Reading from the N-terminus, the 1193-residue chain is DNA polymerase (1193 aa).

The disordered stretch occupies residues 1-88; it reads MALVQTHGSR…PAKKKRGTVV (88 aa). Residues 48–68 show a composition bias toward low complexity; it reads PATTASGSRAAPTARRASSPP.

It belongs to the DNA polymerase type-B family. In terms of assembly, heterodimer with the terminal protein; this heterodimer binds to bp 9 to 18 of the genome. Forms a complex with viral pTP, DBP and hosts NFIA and POU2F1/OCT1 for initiation of replication.

It localises to the host nucleus. It carries out the reaction DNA(n) + a 2'-deoxyribonucleoside 5'-triphosphate = DNA(n+1) + diphosphate. Eukaryotic-type DNA polymerase involved in viral genomic replication. DNA synthesis is protein primed, and acts in a strand displacement replication. Assembles in complex with viral pTP, DBP, host NFIA and host POU2F1/OCT1 on viral origin of replication. The polymerase covalently transfers dCMP onto pTP, thereby initiating complementary strand synthesis. This Homo sapiens (Human) protein is DNA polymerase.